We begin with the raw amino-acid sequence, 275 residues long: Hydroxyethylthiazole kinase (275 aa).

Residue Met50 participates in substrate binding. ATP is bound by residues Arg126 and Ser171. Substrate is bound at residue Ala200.

The protein belongs to the Thz kinase family. The cofactor is Mg(2+).

It carries out the reaction 5-(2-hydroxyethyl)-4-methylthiazole + ATP = 4-methyl-5-(2-phosphooxyethyl)-thiazole + ADP + H(+). It functions in the pathway cofactor biosynthesis; thiamine diphosphate biosynthesis; 4-methyl-5-(2-phosphoethyl)-thiazole from 5-(2-hydroxyethyl)-4-methylthiazole: step 1/1. Functionally, catalyzes the phosphorylation of the hydroxyl group of 4-methyl-5-beta-hydroxyethylthiazole (THZ). This is Hydroxyethylthiazole kinase from Acinetobacter baumannii (strain ACICU).